A 285-amino-acid chain; its full sequence is K88 fimbrial protein AD (285 aa).

The N-terminal stretch at Met1–Ala21 is a signal peptide.

This sequence belongs to the fimbrial K88 protein family. K88 fimbria, 0.1-1 micrometer in length and 7 nanometers in diameter, is composed of about 100 identical subunits.

The protein localises to the fimbrium. K88 major fimbrial subunit. Fimbriae (also called pili), are polar filaments radiating from the surface of the bacterium to a length of 0.5-1.5 micrometers and numbering 100-300 per cell. They enable bacteria to colonize the epithelium of specific host organs. The protein is K88 fimbrial protein AD (faeG) of Escherichia coli.